The sequence spans 79 residues: Protein VdcD (79 aa).

Involved in the non-oxidative decarboxylation and detoxification of phenolic derivatives under both aerobic and anaerobic conditions, however the precise biochemical function of VdcD in metabolism of phenolic acid is unknown. This is Protein VdcD from Streptomyces sp. (strain D7).